The sequence spans 239 residues: 1-(5-phosphoribosyl)-5-[(5-phosphoribosylamino)methylideneamino] imidazole-4-carboxamide isomerase (239 aa).

D8 (proton acceptor) is an active-site residue. The active-site Proton donor is the D129.

This sequence belongs to the HisA/HisF family.

The protein localises to the cytoplasm. It catalyses the reaction 1-(5-phospho-beta-D-ribosyl)-5-[(5-phospho-beta-D-ribosylamino)methylideneamino]imidazole-4-carboxamide = 5-[(5-phospho-1-deoxy-D-ribulos-1-ylimino)methylamino]-1-(5-phospho-beta-D-ribosyl)imidazole-4-carboxamide. It functions in the pathway amino-acid biosynthesis; L-histidine biosynthesis; L-histidine from 5-phospho-alpha-D-ribose 1-diphosphate: step 4/9. This Pelagibacter ubique (strain HTCC1062) protein is 1-(5-phosphoribosyl)-5-[(5-phosphoribosylamino)methylideneamino] imidazole-4-carboxamide isomerase.